Reading from the N-terminus, the 465-residue chain is uncharacterized protein (465 aa).

3 disordered regions span residues 1–55, 70–164, and 221–313; these read MNSS…SSHQ, DFSE…VEGQ, and TTDN…KQRV. A compositionally biased stretch (basic and acidic residues) spans 40-50; that stretch reads ENYKDNSDHSN. A compositionally biased stretch (polar residues) spans 73-82; sequence ESFNDNQNLK. Residues 83–134 show a composition bias toward low complexity; that stretch reads NFNTTDNNFNDDYNNDYDSNNDSNNDSNNDSNNDYDNESNNYFNNDSNNDSN. Over residues 141-150 the composition is skewed to basic and acidic residues; it reads ETTKHKLPIE. Residues 221 to 235 show a composition bias toward low complexity; it reads TTDNQSNTESSQENN. Composition is skewed to basic and acidic residues over residues 236 to 249 and 259 to 275; these read VIKK…DKQP and IVPK…KSIK. Over residues 288–306 the composition is skewed to polar residues; sequence IDQSNKLGKSYNTNNNNSK. Residues 390–423 are a coiled coil; sequence NKASIAELKKMRLEQRKREIEEKRRQVENKKPDS.

This is an uncharacterized protein from Acanthamoeba polyphaga mimivirus (APMV).